The following is a 175-amino-acid chain: MSVSTPERGGAEQGKGPAIARTRAGRQSRIVELLSAHAVRSQSELAALLAAEGIETTQATLSRDLDELGAVKLRAADGGAGVYVVPEDGSPVRGVTGGTDRLSKLLGDLLVSTDASGNIAVLRTPPGAAGYLASALDRAALPYVVGTIAGDDTIAVIAREPLTGAELAAKIEELA.

Positions 1-23 are disordered; it reads MSVSTPERGGAEQGKGPAIARTR.

This sequence belongs to the ArgR family.

The protein resides in the cytoplasm. Its pathway is amino-acid biosynthesis; L-arginine biosynthesis [regulation]. Its function is as follows. Regulates arginine biosynthesis genes. The protein is Arginine repressor of Nocardia farcinica (strain IFM 10152).